We begin with the raw amino-acid sequence, 260 residues long: D-threitol dehydrogenase (260 aa).

Residue 21 to 50 (LVTGAASGIGAAIASAYATKGARIAAVDLN) coordinates NAD(+). Residue Tyr166 is the Proton acceptor of the active site. Lys170 is a binding site for NAD(+).

This sequence belongs to the short-chain dehydrogenases/reductases (SDR) family.

It catalyses the reaction D-threitol + NAD(+) = D-erythrulose + NADH + H(+). Its pathway is carbohydrate metabolism; D-threitol degradation. In terms of biological role, catalyzes the NAD-dependent reversible oxidation of D-threitol. Involved in the degradation pathway of D-threitol, that allows M.smegmatis to grow on this compound as the sole carbon source. Does not catalyze the oxidation of xylitol, L-sorbitol, and L-sorbose. The polypeptide is D-threitol dehydrogenase (Mycolicibacterium smegmatis (strain ATCC 700084 / mc(2)155) (Mycobacterium smegmatis)).